The sequence spans 270 residues: Phospholysine phosphohistidine inorganic pyrophosphate phosphatase (270 aa).

Positions 17 and 19 each coordinate Mg(2+). Residues 17 to 19 (DIS), 54 to 55 (TN), and lysine 189 each bind substrate. Aspartate 214 is a binding site for Mg(2+).

Belongs to the HAD-like hydrolase superfamily. In terms of assembly, homodimer. Mg(2+) serves as cofactor.

The protein resides in the cytoplasm. Its subcellular location is the nucleus. The catalysed reaction is diphosphate + H2O = 2 phosphate + H(+). Its function is as follows. Phosphatase that hydrolyzes imidodiphosphate, 3-phosphohistidine and 6-phospholysine. Has broad substrate specificity and can also hydrolyze inorganic diphosphate, but with lower efficiency. The chain is Phospholysine phosphohistidine inorganic pyrophosphate phosphatase (Lhpp) from Rattus norvegicus (Rat).